A 473-amino-acid chain; its full sequence is Vasculin (473 aa).

Disordered regions lie at residues 1–25 (MAQH…SSLN), 45–169 (RRHN…KSRA), and 191–342 (VGNL…QERD). The residue at position 49 (Ser49) is a Phosphoserine. Position 87 is an omega-N-methylarginine (Arg87). Residues 93–107 (GSSRSRSSIFHSGKS) show a composition bias toward low complexity. Residues 119-133 (ETGRKEDKRERKQFE) show a composition bias toward basic and acidic residues. Polar residues-rich tracts occupy residues 194 to 204 (LPSQPVKNGTG) and 251 to 286 (AFKS…QQPR). A phosphoserine mark is found at Ser274, Ser276, Ser322, and Ser381. The segment covering 293–329 (MRTDKKSEFLKALKRDRVEEEHEDESRAGSEKDDDSF) has biased composition (basic and acidic residues). Residues 444-473 (GPWKNSTFKPTTENDDTETSSSDTSDDDDV) are disordered. The span at 456–473 (ENDDTETSSSDTSDDDDV) shows a compositional bias: acidic residues.

The protein belongs to the vasculin family. In terms of assembly, interacts with GTF2B, GTF2F2, RNA polymerase II and TBP.

It is found in the nucleus. Its function is as follows. Functions as a GC-rich promoter-specific transactivating transcription factor. The chain is Vasculin (GPBP1) from Pongo abelii (Sumatran orangutan).